We begin with the raw amino-acid sequence, 182 residues long: MFDIGFSELLLVFVIGLIVLGPQRLPVAVKTVAGWIRALRSLATTVQNELTQELKLQEFQDSLKKVEKASLENLTPELKASMDELRQAAESMKRTYSANDPEQASDEAHTIHNPVVKGNETQHEGVTPAAAETQASAPEQKPEPVKANVPESTETASVATIDAEKKSAAPVVESSPSSSDKP.

A helical transmembrane segment spans residues 1 to 21 (MFDIGFSELLLVFVIGLIVLG). Disordered stretches follow at residues 87–107 (QAAESMKRTYSANDPEQASDE) and 121–182 (TQHE…SDKP). The segment covering 168 to 182 (AAPVVESSPSSSDKP) has biased composition (low complexity).

This sequence belongs to the TatB family. As to quaternary structure, the Tat system comprises two distinct complexes: a TatABC complex, containing multiple copies of TatA, TatB and TatC subunits, and a separate TatA complex, containing only TatA subunits. Substrates initially bind to the TatABC complex, which probably triggers association of the separate TatA complex to form the active translocon.

The protein resides in the cell inner membrane. In terms of biological role, part of the twin-arginine translocation (Tat) system that transports large folded proteins containing a characteristic twin-arginine motif in their signal peptide across membranes. Together with TatC, TatB is part of a receptor directly interacting with Tat signal peptides. TatB may form an oligomeric binding site that transiently accommodates folded Tat precursor proteins before their translocation. This chain is Sec-independent protein translocase protein TatB, found in Salmonella choleraesuis (strain SC-B67).